The chain runs to 252 residues: 4-formylbenzenesulfonate dehydrogenase TsaC1/TsaC2 (252 aa).

NAD(+)-binding positions include Ile-9–Asp-36 and Asp-62. Ser-142 is a binding site for substrate. The active-site Proton acceptor is Tyr-155. Lys-159 provides a ligand contact to NAD(+).

Belongs to the short-chain dehydrogenases/reductases (SDR) family. Homodimer.

It catalyses the reaction 4-formylbenzenesulfonate + NAD(+) + H2O = 4-sulfobenzoate + NADH + 2 H(+). Its function is as follows. Involved in the toluene-4-sulfonate degradation pathway. Does not discriminate between the sulfonate and the carboxyl substituents and can also be involved in the p-toluenecarboxylate degradation pathway. In Comamonas testosteroni (Pseudomonas testosteroni), this protein is 4-formylbenzenesulfonate dehydrogenase TsaC1/TsaC2 (tsaC1).